A 517-amino-acid chain; its full sequence is AAA ATPase forming ring-shaped complexes (517 aa).

Residues 25–53 adopt a coiled-coil conformation; sequence ARNAKLVELLQASRTKLEEINGRLEALAE. 233–238 contributes to the ATP binding site; it reads GNGKTL.

Belongs to the AAA ATPase family. In terms of assembly, homohexamer. Assembles into a hexameric ring structure.

This is AAA ATPase forming ring-shaped complexes from Corynebacterium jeikeium (strain K411).